We begin with the raw amino-acid sequence, 1020 residues long: Contactin-1 (1020 aa).

The first 20 residues, 1–20, serve as a signal peptide directing secretion; it reads MKMPLLVSHLLLISLTSCLG. Ig-like C2-type domains follow at residues 41–131, 137–223, 241–326, 331–407, 413–500, and 504–603; these read PIFE…ATLS, PFPP…KSVF, PADI…ARIY, PEWV…AELK, PTFE…GTLV, and PTRI…LVVR. 2 disulfides stabilise this stretch: Cys-65–Cys-114 and Cys-158–Cys-211. 2 N-linked (GlcNAc...) asparagine glycosylation sites follow: Asn-208 and Asn-258. Cys-263 and Cys-310 are disulfide-bonded. An N-linked (GlcNAc...) asparagine glycan is attached at Asn-338. Disulfide bonds link Cys-352-Cys-391 and Cys-436-Cys-484. N-linked (GlcNAc...) asparagine glycans are attached at residues Asn-457, Asn-473, Asn-494, and Asn-521. Cys-526 and Cys-585 are disulfide-bonded. An N-linked (GlcNAc...) asparagine glycan is attached at Asn-593. 4 Fibronectin type-III domains span residues 608 to 706, 711 to 808, 813 to 908, and 909 to 1002; these read PPGG…TDGA, APSD…SAQD, APTE…APPS, and QPPR…TLSS. The disordered stretch occupies residues 695 to 719; it reads SIPSNRIKTDGAAPNVAPSDVGGGG. Residue Asn-935 is glycosylated (N-linked (GlcNAc...) asparagine). Ser-1001 carries the GPI-anchor amidated serine lipid modification. Positions 1002-1020 are cleaved as a propeptide — removed in mature form; the sequence is SSLLSLLLPSLGFLVYSEF.

Belongs to the immunoglobulin superfamily. Contactin family. Monomer. Interacts with CNTNAP1 in cis form. Binds to the carbonic-anhydrase like domain of PTPRZ1. Interacts with NOTCH1 and TNR. Detected in a complex with NRCAM and PTPRB. Interacts with TASOR. In terms of tissue distribution, expressed in the ovary and in Sertoli cells of the testis.

It localises to the cell membrane. Functionally, contactins mediate cell surface interactions during nervous system development. Involved in the formation of paranodal axo-glial junctions in myelinated peripheral nerves and in the signaling between axons and myelinating glial cells via its association with CNTNAP1. Participates in oligodendrocytes generation by acting as a ligand of NOTCH1. Its association with NOTCH1 promotes NOTCH1 activation through the released notch intracellular domain (NICD) and subsequent translocation to the nucleus. Interaction with TNR induces a repulsion of neurons and an inhibition of neurite outgrowth. In Mus musculus (Mouse), this protein is Contactin-1 (Cntn1).